We begin with the raw amino-acid sequence, 198 residues long: Nucleoid occlusion factor SlmA (198 aa).

Residues 10-70 enclose the HTH tetR-type domain; sequence NRREEILQSL…SLIEFIEDSL (61 aa). The segment at residues 33–52 is a DNA-binding region (H-T-H motif); sequence TTAKLAASVGVSEAALYRHF. The stretch at 117–144 forms a coiled coil; that stretch reads EQDRLQGRINQLFERIEAQLRQVLREKR.

The protein belongs to the nucleoid occlusion factor SlmA family. As to quaternary structure, homodimer. Interacts with FtsZ.

The protein localises to the cytoplasm. The protein resides in the nucleoid. In terms of biological role, required for nucleoid occlusion (NO) phenomenon, which prevents Z-ring formation and cell division over the nucleoid. Acts as a DNA-associated cell division inhibitor that binds simultaneously chromosomal DNA and FtsZ, and disrupts the assembly of FtsZ polymers. SlmA-DNA-binding sequences (SBS) are dispersed on non-Ter regions of the chromosome, preventing FtsZ polymerization at these regions. The chain is Nucleoid occlusion factor SlmA from Escherichia coli O127:H6 (strain E2348/69 / EPEC).